Consider the following 416-residue polypeptide: Lipoyl synthase, mitochondrial (416 aa).

The N-terminal 33 residues, 1 to 33 (MAAPTRSLRRLSSFRTTISPSLTVTAPIGCRSY), are a transit peptide targeting the mitochondrion. Residues C132, C137, C143, C163, C167, C170, and S378 each coordinate [4Fe-4S] cluster. The Radical SAM core domain maps to 148 to 367 (DKSSATATIM…RQRALDMGFL (220 aa)). The tract at residues 396–416 (GSGTAERTVDQTAATTDEATR) is disordered. Residues 405–416 (DQTAATTDEATR) are compositionally biased toward polar residues.

Belongs to the radical SAM superfamily. Lipoyl synthase family. [4Fe-4S] cluster serves as cofactor.

Its subcellular location is the mitochondrion. It carries out the reaction [[Fe-S] cluster scaffold protein carrying a second [4Fe-4S](2+) cluster] + N(6)-octanoyl-L-lysyl-[protein] + 2 oxidized [2Fe-2S]-[ferredoxin] + 2 S-adenosyl-L-methionine + 4 H(+) = [[Fe-S] cluster scaffold protein] + N(6)-[(R)-dihydrolipoyl]-L-lysyl-[protein] + 4 Fe(3+) + 2 hydrogen sulfide + 2 5'-deoxyadenosine + 2 L-methionine + 2 reduced [2Fe-2S]-[ferredoxin]. It functions in the pathway protein modification; protein lipoylation via endogenous pathway; protein N(6)-(lipoyl)lysine from octanoyl-[acyl-carrier-protein]: step 2/2. Catalyzes the radical-mediated insertion of two sulfur atoms into the C-6 and C-8 positions of the octanoyl moiety bound to the lipoyl domains of lipoate-dependent enzymes, thereby converting the octanoylated domains into lipoylated derivatives. In Penicillium rubens (strain ATCC 28089 / DSM 1075 / NRRL 1951 / Wisconsin 54-1255) (Penicillium chrysogenum), this protein is Lipoyl synthase, mitochondrial.